The sequence spans 86 residues: High affinity immunoglobulin epsilon receptor subunit gamma (86 aa).

An N-terminal signal peptide occupies residues 1 to 18; sequence MIPAVVLLLLLLVEQAAA. Residues 19–23 are Extracellular-facing; it reads LGEPQ. A helical transmembrane segment spans residues 24–44; sequence LCYILDAILFLYGIVLTLLYC. Topologically, residues 45-86 are cytoplasmic; sequence RLKLQVRKAAIDSYEKSDGVYTGLSTRNQETYETLKHEKPPQ. Positions 54–82 constitute an ITAM domain; that stretch reads AIDSYEKSDGVYTGLSTRNQETYETLKHE. The residue at position 65 (Tyr-65) is a Phosphotyrosine. Ser-69 is subject to Phosphoserine. Tyr-76 bears the Phosphotyrosine mark. A Phosphothreonine modification is found at Thr-78.

This sequence belongs to the CD3Z/FCER1G family. As to quaternary structure, igE Fc receptor is a tetramer of an alpha chain, a beta chain, and two disulfide linked gamma chains. Associates with FCGR1A; forms a functional signaling complex. The signaling subunit of immunoglobulin gamma (IgG) Fc receptor complex. As a homodimer or a heterodimer of CD247 and FCER1G, associates with the ligand binding subunit FCGR3A to form a functional receptor complex. Associates with CLEC6A. Interacts with CLEC4E. Interacts (via ITAM domain) with SYK (via SH2 domains); activates SYK, enabling integrin-mediated activation of neutrophils and macrophages. Interacts with common beta chain of interleukin 3 receptor CSF2RB and recruits SYK in response to IL3 stimulation; this interaction is direct. Interacts with CD300LH; the interaction may be indirect. Interacts with CD300LD. Interacts with TARM1.

The protein localises to the cell membrane. Functionally, adapter protein containing an immunoreceptor tyrosine-based activation motif (ITAM) that transduces activation signals from various immunoreceptors. As a component of the high-affinity immunoglobulin E (IgE) receptor, mediates allergic inflammatory signaling in mast cells. As a constitutive component of interleukin-3 receptor complex, selectively mediates interleukin 4/IL4 production b basophils priming T-cells toward effector T-helper 2 subset. Associates with pattern recognition receptors CLEC4D and CLEC4E to form a functional signaling complex in myeloid cells. Binding of mycobacterial trehalose 6,6'-dimycolate (TDM) to this receptor complex leads to phosphorylation of ITAM, triggering activation of SYK, CARD9 and NF-kappa-B, consequently driving maturation of antigen-presenting cells and shaping antigen-specific priming of T-cells toward effector T-helper 1 and T-helper 17 cell subtypes. May function cooperatively with other activating receptors. Functionally linked to integrin beta-2/ITGB2-mediated neutrophil activation. Also involved in integrin alpha-2/ITGA2-mediated platelet activation. This Sus scrofa (Pig) protein is High affinity immunoglobulin epsilon receptor subunit gamma (FCER1G).